The following is a 493-amino-acid chain: Glutamyl-tRNA(Gln) amidotransferase subunit A (493 aa).

Catalysis depends on charge relay system residues Lys78 and Ser158. The active-site Acyl-ester intermediate is Ser182.

This sequence belongs to the amidase family. GatA subfamily. Heterotrimer of A, B and C subunits.

It catalyses the reaction L-glutamyl-tRNA(Gln) + L-glutamine + ATP + H2O = L-glutaminyl-tRNA(Gln) + L-glutamate + ADP + phosphate + H(+). Its function is as follows. Allows the formation of correctly charged Gln-tRNA(Gln) through the transamidation of misacylated Glu-tRNA(Gln) in organisms which lack glutaminyl-tRNA synthetase. The reaction takes place in the presence of glutamine and ATP through an activated gamma-phospho-Glu-tRNA(Gln). This chain is Glutamyl-tRNA(Gln) amidotransferase subunit A, found in Methylorubrum extorquens (strain CM4 / NCIMB 13688) (Methylobacterium extorquens).